A 247-amino-acid chain; its full sequence is Adenosine 5'-phosphosulfate reductase (247 aa).

The [4Fe-4S] cluster site is built by Cys133, Cys134, Cys216, and Cys219. Residues Lys222–Ser247 form a disordered region. Catalysis depends on Cys242, which acts as the Nucleophile; cysteine thiosulfonate intermediate.

The protein belongs to the PAPS reductase family. CysH subfamily. It depends on [4Fe-4S] cluster as a cofactor.

The protein resides in the cytoplasm. It carries out the reaction [thioredoxin]-disulfide + sulfite + AMP + 2 H(+) = adenosine 5'-phosphosulfate + [thioredoxin]-dithiol. The protein operates within sulfur metabolism; hydrogen sulfide biosynthesis; sulfite from sulfate. In terms of biological role, catalyzes the formation of sulfite from adenosine 5'-phosphosulfate (APS) using thioredoxin as an electron donor. In Rhodococcus opacus (strain B4), this protein is Adenosine 5'-phosphosulfate reductase.